The following is a 209-amino-acid chain: UPF0502 protein mll4256 (209 aa).

This sequence belongs to the UPF0502 family.

This Mesorhizobium japonicum (strain LMG 29417 / CECT 9101 / MAFF 303099) (Mesorhizobium loti (strain MAFF 303099)) protein is UPF0502 protein mll4256.